Consider the following 440-residue polypeptide: Xaa-Pro dipeptidase (440 aa).

Residues Asp-244, Asp-255, His-335, Glu-380, and Glu-419 each coordinate Mn(2+).

It belongs to the peptidase M24B family. Bacterial-type prolidase subfamily. The cofactor is Mn(2+).

It catalyses the reaction Xaa-L-Pro dipeptide + H2O = an L-alpha-amino acid + L-proline. In terms of biological role, splits dipeptides with a prolyl residue in the C-terminal position. In Shewanella baltica (strain OS185), this protein is Xaa-Pro dipeptidase.